A 96-amino-acid chain; its full sequence is MVLYFYNKINRSFGLMILLYFFRSGGLAFRISELFLIFSIPLFALLINELSGVNRVLMFFILVYYISIVFLRRIYVHVVFGVNTFLPYKPIFDSYL.

Transmembrane regions (helical) follow at residues 27-47 and 50-70; these read LAFRISELFLIFSIPLFALLI and LSGVNRVLMFFILVYYISIVF.

The protein localises to the cell membrane. This is an uncharacterized protein from Haemophilus influenzae (strain ATCC 51907 / DSM 11121 / KW20 / Rd).